We begin with the raw amino-acid sequence, 349 residues long: S-adenosylmethionine:tRNA ribosyltransferase-isomerase (349 aa).

It belongs to the QueA family. As to quaternary structure, monomer.

The protein localises to the cytoplasm. It catalyses the reaction 7-aminomethyl-7-carbaguanosine(34) in tRNA + S-adenosyl-L-methionine = epoxyqueuosine(34) in tRNA + adenine + L-methionine + 2 H(+). It functions in the pathway tRNA modification; tRNA-queuosine biosynthesis. Transfers and isomerizes the ribose moiety from AdoMet to the 7-aminomethyl group of 7-deazaguanine (preQ1-tRNA) to give epoxyqueuosine (oQ-tRNA). The protein is S-adenosylmethionine:tRNA ribosyltransferase-isomerase of Cupriavidus pinatubonensis (strain JMP 134 / LMG 1197) (Cupriavidus necator (strain JMP 134)).